A 656-amino-acid polypeptide reads, in one-letter code: DNA mismatch repair protein MutL (656 aa).

It belongs to the DNA mismatch repair MutL/HexB family.

Its function is as follows. This protein is involved in the repair of mismatches in DNA. It is required for dam-dependent methyl-directed DNA mismatch repair. May act as a 'molecular matchmaker', a protein that promotes the formation of a stable complex between two or more DNA-binding proteins in an ATP-dependent manner without itself being part of a final effector complex. This is DNA mismatch repair protein MutL from Lactococcus lactis subsp. lactis (strain IL1403) (Streptococcus lactis).